The primary structure comprises 693 residues: Testis-specific Y-encoded-like protein 2 (693 aa).

2 disordered regions span residues 1–56 (MDRP…EAAQ) and 104–125 (GYGE…EASG). Residue Lys11 forms a Glycyl lysine isopeptide (Lys-Gly) (interchain with G-Cter in SUMO2) linkage. Residues Ser18 and Ser20 each carry the phosphoserine modification. Residues 23–44 (RDPPPPPPPPPLLRLPLPPPQQ) show a composition bias toward pro residues. Residues Lys163 and Lys165 each participate in a glycyl lysine isopeptide (Lys-Gly) (interchain with G-Cter in SUMO2) cross-link. Residues 175-207 (EDEDERESMRSSRRRRRRRRRKQRKVKRESRER) are disordered. The segment covering 185–202 (SSRRRRRRRRRKQRKVKR) has biased composition (basic residues). Thr340 carries the post-translational modification Phosphothreonine. 2 disordered regions span residues 474–605 (ENIC…DIEY) and 627–693 (ISDE…GKTG). Residues 487 to 496 (VPNNETTDNN) are compositionally biased toward polar residues. The span at 509 to 519 (ESADDNNENPE) shows a compositional bias: acidic residues. Residues 531–542 (NPNNNENTYGNN) show a composition bias toward low complexity. Composition is skewed to acidic residues over residues 559–602 (SDSD…DDRD) and 627–675 (ISDE…DLED). Residues Ser658, Ser668, and Ser671 each carry the phosphoserine modification.

This sequence belongs to the nucleosome assembly protein (NAP) family. As to quaternary structure, interacts with histones. Interacts with CASK. Part of a complex containing CASK, TBR1 and TSPYL2. In terms of processing, phosphorylation at Ser-20 and/or Thr-340 impairs function on cell proliferation. Ubiquitously expressed, with highest levels in brain, testis and heart, and lowest levels in liver and pancreas.

The protein resides in the nucleus. It localises to the cytoplasm. Functionally, part of the CASK/TBR1/TSPYL2 transcriptional complex which modulates gene expression in response to neuronal synaptic activity, probably by facilitating nucleosome assembly. May inhibit cell proliferation by inducing p53-dependent CDKN1A expression. The protein is Testis-specific Y-encoded-like protein 2 (TSPYL2) of Homo sapiens (Human).